Reading from the N-terminus, the 334-residue chain is Cytochrome c biogenesis protein CcsA (334 aa).

The next 8 helical transmembrane spans lie at 12–32, 35–55, 67–87, 96–116, 141–161, 242–262, 277–297, and 303–323; these read NTAF…VVFP, WLVQ…TALL, ISNL…VHFI, FVGA…ALTL, VMMV…AFLF, IIGL…VWAN, WALI…TKGW, and AILA…VNLL.

Belongs to the CcmF/CycK/Ccl1/NrfE/CcsA family. In terms of assembly, may interact with ccs1.

It is found in the cellular thylakoid membrane. Its function is as follows. Required during biogenesis of c-type cytochromes (cytochrome c6 and cytochrome f) at the step of heme attachment. The protein is Cytochrome c biogenesis protein CcsA of Synechocystis sp. (strain ATCC 27184 / PCC 6803 / Kazusa).